A 370-amino-acid chain; its full sequence is 3-dehydroquinate synthase (370 aa).

Residues 112-116 (GVVGD), 136-137 (TS), Lys-149, Lys-158, and 176-179 (TLRT) each bind NAD(+). 3 residues coordinate Zn(2+): Glu-191, His-254, and His-276.

It belongs to the sugar phosphate cyclases superfamily. Dehydroquinate synthase family. Co(2+) is required as a cofactor. It depends on Zn(2+) as a cofactor. NAD(+) serves as cofactor.

The protein resides in the cytoplasm. It catalyses the reaction 7-phospho-2-dehydro-3-deoxy-D-arabino-heptonate = 3-dehydroquinate + phosphate. Its pathway is metabolic intermediate biosynthesis; chorismate biosynthesis; chorismate from D-erythrose 4-phosphate and phosphoenolpyruvate: step 2/7. In terms of biological role, catalyzes the conversion of 3-deoxy-D-arabino-heptulosonate 7-phosphate (DAHP) to dehydroquinate (DHQ). In Xanthomonas campestris pv. campestris (strain 8004), this protein is 3-dehydroquinate synthase.